Reading from the N-terminus, the 211-residue chain is Protein FAM167A (211 aa).

2 disordered regions span residues 1-30 (MSVP…DHLR) and 56-108 (EEQT…GKLE). Residues 120–153 (LRKELMEMRLQDQQLARQLMRLRSDIHKLKIEQT) adopt a coiled-coil conformation.

This sequence belongs to the FAM167 (SEC) family.

This chain is Protein FAM167A (FAM167A), found in Bos taurus (Bovine).